A 253-amino-acid polypeptide reads, in one-letter code: MLMKQKGIIIKSVDYGESDKIITILNEYGAKIPLMARRAKKVKSGLQANTQLFVYGLFIYNKWRGMGTLNSVDVINQHYELQLDLFESSYASLCAETIDRSMEENEVSKYNYDLLQFVLSKINEGTPAQLMSVIVLLKNMSKFGFTASFDHCAITGIQDQSKLIAYSFKFDGAISESALYQDQHAFHLSNRTLYLLNILQQLPISKMNHLNIQQDILNEMSELLIMLYREYAGMFFKSQKLINQLNRLEKDSL.

It belongs to the RecO family.

Functionally, involved in DNA repair and RecF pathway recombination. This is DNA repair protein RecO from Staphylococcus epidermidis (strain ATCC 35984 / DSM 28319 / BCRC 17069 / CCUG 31568 / BM 3577 / RP62A).